Consider the following 439-residue polypeptide: MAAQAPPTDELSKLSVEDADNKPQPDASNGNLNHDEDDSEDDAEDASAPAAGGAKKKKKRKPRKKKKNPTQQSDPPRVLISQLFPDKQYPKGEEVEYLNENSYRTTNEEKRHLDNLKSEFLNDYRHAAEAHRQVRQWAAKNIKPGQSLTDIANGIEDSVRALVGHQGLEEGDALIAGMGFPTGLSINHCAAHYTPNAGNKMILQQDDVMKIDFGVQVNGNIVDSAFTMAFNPRYDPLLEAVKAATNAGIKEAGIDVRLGEIGGVIQEVMESYEVEIDGTTYPVKPIRNLNGHTILPYNIHGGKSVPIVKSNDTTKMEEGDVFAIETFGSTGGGHVIEDGEVSHYAKRTDAPKVDLRLSSAKSLLSVINKNFGTLPWCRRYLDRLGQEKYLLGLNNLVSNGIVEAYPPLVDKKGSYTAQFEHTILIRPTVKEVISRGDDF.

The segment at methionine 1–proline 90 is disordered. Residues glutamate 10 to proline 23 are compositionally biased toward basic and acidic residues. Residues aspartate 35 to aspartate 45 are compositionally biased toward acidic residues. A compositionally biased stretch (basic residues) spans alanine 54–asparagine 68. Histidine 192 provides a ligand contact to substrate. Residues aspartate 212, aspartate 223, and histidine 292 each contribute to the a divalent metal cation site. Substrate is bound at residue histidine 300. 2 residues coordinate a divalent metal cation: glutamate 325 and glutamate 420.

It belongs to the peptidase M24A family. Methionine aminopeptidase eukaryotic type 2 subfamily. Requires Co(2+) as cofactor. The cofactor is Zn(2+). Mn(2+) is required as a cofactor. Fe(2+) serves as cofactor.

The protein resides in the cytoplasm. It catalyses the reaction Release of N-terminal amino acids, preferentially methionine, from peptides and arylamides.. In terms of biological role, cotranslationally removes the N-terminal methionine from nascent proteins. The N-terminal methionine is often cleaved when the second residue in the primary sequence is small and uncharged (Met-Ala-, Cys, Gly, Pro, Ser, Thr, or Val). This is Methionine aminopeptidase 2-2 from Chaetomium globosum (strain ATCC 6205 / CBS 148.51 / DSM 1962 / NBRC 6347 / NRRL 1970) (Soil fungus).